A 37-amino-acid chain; its full sequence is Antifungal protein S (37 aa).

This sequence belongs to the thaumatin family.

In terms of biological role, has antifungal activity. Inhibits the growth of Trichoderma viridae and Candida albicans. In Hordeum vulgare (Barley), this protein is Antifungal protein S.